Here is a 289-residue protein sequence, read N- to C-terminus: tRNA U34 carboxymethyltransferase (289 aa).

Residues K60, W74, K79, G98, 120–122 (DPS), 147–148 (VE), Y167, and R282 contribute to the carboxy-S-adenosyl-L-methionine site.

This sequence belongs to the class I-like SAM-binding methyltransferase superfamily. CmoB family. As to quaternary structure, homotetramer.

It carries out the reaction carboxy-S-adenosyl-L-methionine + 5-hydroxyuridine(34) in tRNA = 5-carboxymethoxyuridine(34) in tRNA + S-adenosyl-L-homocysteine + H(+). Functionally, catalyzes carboxymethyl transfer from carboxy-S-adenosyl-L-methionine (Cx-SAM) to 5-hydroxyuridine (ho5U) to form 5-carboxymethoxyuridine (cmo5U) at position 34 in tRNAs. This chain is tRNA U34 carboxymethyltransferase, found in Campylobacter concisus (strain 13826).